The sequence spans 224 residues: Proline/serine-rich protein C17A5.10 (224 aa).

The span at 1 to 10 shows a compositional bias: pro residues; that stretch reads MTDDSVPPPS. The tract at residues 1-110 is disordered; the sequence is MTDDSVPPPS…SNYNTAKPPY (110 aa). The segment covering 31–52 has biased composition (low complexity); sequence TSTSAGHPSSSSSTLPNYAASS. Polar residues-rich tracts occupy residues 53–68, 77–94, and 101–110; these read LNSR…NAYS, PTSQ…STMY, and SNYNTAKPPY.

The protein belongs to the HUA1 family.

The protein localises to the cytoplasm. In terms of biological role, may be involved in assembly and disassembly of the actin cytoskeleton. This chain is Proline/serine-rich protein C17A5.10, found in Schizosaccharomyces pombe (strain 972 / ATCC 24843) (Fission yeast).